We begin with the raw amino-acid sequence, 910 residues long: Importin subunit beta-2 (910 aa).

HEAT repeat units lie at residues 12–39, 44–82, 93–126, 132–169, 177–207, 220–247, 259–286, 302–406, 414–442, 454–481, 499–532, 540–573, 581–619, 627–677, 690–721, 729–764, 772–807, 815–848, and 857–888; these read VLVE…NLLE, IPDL…VSSL, YTKS…RWGI, VLPQ…LDRD, DFMI…QFVL, FLET…VYLL, GSIV…FWLA, DKIV…LSSF, IILP…GAIA, PELY…TLGR, FVPL…EEQA, LEPI…ADYV, RYIE…VALR, AETY…ALGS, LGQI…MYCF, DALL…LQLG, KPLL…VYNP, ELFY…LACN, and PMFV…VELF. Positions 34–122 constitute an Importin N-terminal domain; it reads ALNLLEKAKD…SGNVITTIIS (89 aa). The interval 333 to 381 is disordered; sequence DREEDIRPQHAKGKSRITLNTQGPITQQGSSNADADELEDEDEDDDEFD. The segment covering 349–364 has biased composition (polar residues); that stretch reads ITLNTQGPITQQGSSN. Over residues 366–381 the composition is skewed to acidic residues; sequence DADELEDEDEDDDEFD.

Belongs to the importin beta family. Importin beta-2 subfamily. As to quaternary structure, interacts with Ran; interacts specifically with the GTP-bound form of Ran (GTP-Ran), protecting it from GTP hydrolysis and nucleotide exchange. Interacts with nucleoporins.

Its subcellular location is the cytoplasm. The protein resides in the nucleus envelope. In terms of biological role, functions in nuclear protein import as nuclear transport receptor. Serves as receptor for arginine/glycine-rich nuclear localization signals (rg-NLS) and PY-NLS in cargo substrates. Its predominant cargo substrate seems to be mRNA-binding proteins. Mediates docking of the importin/substrate complex to the nuclear pore complex (NPC) through binding to repeat-containing nucleoporins. The complex is subsequently translocated through the pore by an energy requiring, Ran-dependent mechanism. At the nucleoplasmic side of the NPC, GTP-Ran binding leads to release of the cargo. The importin is re-exported from the nucleus to the cytoplasm where GTP hydrolysis releases Ran from importin. The directionality of nuclear import is thought to be conferred by an asymmetric distribution of the GTP- and GDP-bound forms of Ran between the cytoplasm and nucleus. This Schizosaccharomyces pombe (strain 972 / ATCC 24843) (Fission yeast) protein is Importin subunit beta-2.